Here is a 565-residue protein sequence, read N- to C-terminus: Sulfite reductase [NADPH] hemoprotein beta-component (565 aa).

Positions 429, 435, 474, and 478 each coordinate [4Fe-4S] cluster. Position 478 (Cys-478) interacts with siroheme.

This sequence belongs to the nitrite and sulfite reductase 4Fe-4S domain family. As to quaternary structure, alpha(8)-beta(8). The alpha component is a flavoprotein, the beta component is a hemoprotein. The cofactor is siroheme. [4Fe-4S] cluster is required as a cofactor.

The enzyme catalyses hydrogen sulfide + 3 NADP(+) + 3 H2O = sulfite + 3 NADPH + 4 H(+). The protein operates within sulfur metabolism; hydrogen sulfide biosynthesis; hydrogen sulfide from sulfite (NADPH route): step 1/1. Functionally, component of the sulfite reductase complex that catalyzes the 6-electron reduction of sulfite to sulfide. This is one of several activities required for the biosynthesis of L-cysteine from sulfate. The chain is Sulfite reductase [NADPH] hemoprotein beta-component from Shewanella baltica (strain OS155 / ATCC BAA-1091).